A 477-amino-acid chain; its full sequence is Aspartyl/glutamyl-tRNA(Asn/Gln) amidotransferase subunit B (477 aa).

The protein belongs to the GatB/GatE family. GatB subfamily. In terms of assembly, heterotrimer of A, B and C subunits.

The enzyme catalyses L-glutamyl-tRNA(Gln) + L-glutamine + ATP + H2O = L-glutaminyl-tRNA(Gln) + L-glutamate + ADP + phosphate + H(+). It catalyses the reaction L-aspartyl-tRNA(Asn) + L-glutamine + ATP + H2O = L-asparaginyl-tRNA(Asn) + L-glutamate + ADP + phosphate + 2 H(+). In terms of biological role, allows the formation of correctly charged Asn-tRNA(Asn) or Gln-tRNA(Gln) through the transamidation of misacylated Asp-tRNA(Asn) or Glu-tRNA(Gln) in organisms which lack either or both of asparaginyl-tRNA or glutaminyl-tRNA synthetases. The reaction takes place in the presence of glutamine and ATP through an activated phospho-Asp-tRNA(Asn) or phospho-Glu-tRNA(Gln). In Oenococcus oeni (strain ATCC BAA-331 / PSU-1), this protein is Aspartyl/glutamyl-tRNA(Asn/Gln) amidotransferase subunit B.